Reading from the N-terminus, the 161-residue chain is Mediator of RNA polymerase II transcription subunit 10 (161 aa).

Belongs to the Mediator complex subunit 10 family. As to quaternary structure, component of the Mediator complex.

Its subcellular location is the nucleus. Functionally, component of the Mediator complex, a coactivator involved in the regulated transcription of nearly all RNA polymerase II-dependent genes. Mediator functions as a bridge to convey information from gene-specific regulatory proteins to the basal RNA polymerase II transcription machinery. Mediator is recruited to promoters by direct interactions with regulatory proteins and serves as a scaffold for the assembly of a functional preinitiation complex with RNA polymerase II and the general transcription factors. This is Mediator of RNA polymerase II transcription subunit 10 (NUT2) from Kluyveromyces lactis (strain ATCC 8585 / CBS 2359 / DSM 70799 / NBRC 1267 / NRRL Y-1140 / WM37) (Yeast).